The following is a 122-amino-acid chain: Large ribosomal subunit protein uL29A (122 aa).

A coiled-coil region spans residues 10 to 69 (QLGIKQIEERAAEIKADLAALRQKKNSGDVGANDIKTAKKNLARALTVRREKILEELVEA).

Belongs to the universal ribosomal protein uL29 family. Component of the large ribosomal subunit.

It localises to the cytoplasm. This Encephalitozoon cuniculi (strain GB-M1) (Microsporidian parasite) protein is Large ribosomal subunit protein uL29A (RPL35A).